We begin with the raw amino-acid sequence, 513 residues long: ATP synthase subunit alpha (513 aa).

An ATP-binding site is contributed by 169 to 176 (GDRQTGKT).

It belongs to the ATPase alpha/beta chains family. In terms of assembly, F-type ATPases have 2 components, CF(1) - the catalytic core - and CF(0) - the membrane proton channel. CF(1) has five subunits: alpha(3), beta(3), gamma(1), delta(1), epsilon(1). CF(0) has three main subunits: a(1), b(2) and c(9-12). The alpha and beta chains form an alternating ring which encloses part of the gamma chain. CF(1) is attached to CF(0) by a central stalk formed by the gamma and epsilon chains, while a peripheral stalk is formed by the delta and b chains.

It localises to the cell inner membrane. It carries out the reaction ATP + H2O + 4 H(+)(in) = ADP + phosphate + 5 H(+)(out). Functionally, produces ATP from ADP in the presence of a proton gradient across the membrane. The alpha chain is a regulatory subunit. The polypeptide is ATP synthase subunit alpha (Actinobacillus pleuropneumoniae serotype 3 (strain JL03)).